A 134-amino-acid chain; its full sequence is Large ribosomal subunit protein bL20 (134 aa).

It belongs to the bacterial ribosomal protein bL20 family.

In terms of biological role, binds directly to 23S ribosomal RNA and is necessary for the in vitro assembly process of the 50S ribosomal subunit. It is not involved in the protein synthesizing functions of that subunit. The chain is Large ribosomal subunit protein bL20 from Sinorhizobium fredii (strain NBRC 101917 / NGR234).